We begin with the raw amino-acid sequence, 267 residues long: Apolipoprotein A-I (267 aa).

The signal sequence occupies residues 1–18 (MKAAVLTLAVLFLTGSQA). 2 consecutive repeat copies span residues 68–89 (LKLL…EQLG) and 90–111 (PVTQ…QEMS). A 10 X approximate tandem repeats region spans residues 68-267 (LKLLDNWDSM…EEYTKKLNTQ (200 aa)). At M110 the chain carries Methionine sulfoxide. Residues 112–122 (KDLEEVKAKVQ) form a 3; half-length repeat. A run of 5 repeats spans residues 123 to 144 (PYLD…QKVE), 145 to 166 (PLRA…EKLS), 167 to 188 (PLGE…THLA), 189 to 210 (PYTD…ENGG), and 211 to 232 (ARLA…EKAK). M136 is modified (methionine sulfoxide). The stretch at 233–243 (PALEDLRQGLL) is one 9; half-length repeat. The stretch at 244 to 267 (PVLESFKVSFLSALEEYTKKLNTQ) is repeat 10.

The protein belongs to the apolipoprotein A1/A4/E family. Homodimer. Interacts with APOA1BP and CLU. Component of a sperm activating protein complex (SPAP), consisting of APOA1, an immunoglobulin heavy chain, an immunoglobulin light chain and albumin. Interacts with NDRG1. Interacts with SCGB3A2. Interacts with NAXE and YJEFN3. Post-translationally, glycosylated. Palmitoylated. In terms of tissue distribution, major protein of plasma HDL, also found in chylomicrons.

The protein resides in the secreted. Participates in the reverse transport of cholesterol from tissues to the liver for excretion by promoting cholesterol efflux from tissues and by acting as a cofactor for the lecithin cholesterol acyltransferase (LCAT). As part of the SPAP complex, activates spermatozoa motility. The protein is Apolipoprotein A-I (APOA1) of Pongo abelii (Sumatran orangutan).